Consider the following 233-residue polypeptide: Large ribosomal subunit protein eL6y (233 aa).

The segment covering 48–72 has biased composition (basic and acidic residues); sequence HDAKSKVDAPVEKPPKFYPAEDVKK. The tract at residues 48-82 is disordered; it reads HDAKSKVDAPVEKPPKFYPAEDVKKPLPNRRTAKP.

The protein belongs to the eukaryotic ribosomal protein eL6 family.

The protein is Large ribosomal subunit protein eL6y (RPL6B) of Arabidopsis thaliana (Mouse-ear cress).